The chain runs to 425 residues: Adenylosuccinate synthetase (425 aa).

GTP is bound by residues Gly-12 to Lys-18 and Gly-40 to Thr-42. Asp-13 acts as the Proton acceptor in catalysis. 2 residues coordinate Mg(2+): Asp-13 and Gly-40. IMP is bound by residues Asp-13 to Lys-16, Asn-38 to His-41, Thr-127, Arg-141, Gln-222, Thr-237, and Arg-301. The active-site Proton donor is the His-41. Ala-297 to Arg-303 contacts substrate. GTP-binding positions include Arg-303, Lys-329–Asp-331, and Ser-411–Gly-413.

This sequence belongs to the adenylosuccinate synthetase family. In terms of assembly, homodimer. Requires Mg(2+) as cofactor.

The protein localises to the cytoplasm. It carries out the reaction IMP + L-aspartate + GTP = N(6)-(1,2-dicarboxyethyl)-AMP + GDP + phosphate + 2 H(+). The protein operates within purine metabolism; AMP biosynthesis via de novo pathway; AMP from IMP: step 1/2. Its function is as follows. Plays an important role in the de novo pathway of purine nucleotide biosynthesis. Catalyzes the first committed step in the biosynthesis of AMP from IMP. This is Adenylosuccinate synthetase from Fusobacterium nucleatum subsp. nucleatum (strain ATCC 25586 / DSM 15643 / BCRC 10681 / CIP 101130 / JCM 8532 / KCTC 2640 / LMG 13131 / VPI 4355).